A 550-amino-acid chain; its full sequence is Glucose-6-phosphate isomerase 3 (550 aa).

Glutamate 357 serves as the catalytic Proton donor. Catalysis depends on residues histidine 388 and lysine 514.

Belongs to the GPI family.

It localises to the cytoplasm. It catalyses the reaction alpha-D-glucose 6-phosphate = beta-D-fructose 6-phosphate. It functions in the pathway carbohydrate biosynthesis; gluconeogenesis. Its pathway is carbohydrate degradation; glycolysis; D-glyceraldehyde 3-phosphate and glycerone phosphate from D-glucose: step 2/4. In terms of biological role, catalyzes the reversible isomerization of glucose-6-phosphate to fructose-6-phosphate. This chain is Glucose-6-phosphate isomerase 3, found in Rhodococcus jostii (strain RHA1).